Consider the following 137-residue polypeptide: Large ribosomal subunit protein uL16 (137 aa).

This sequence belongs to the universal ribosomal protein uL16 family. As to quaternary structure, part of the 50S ribosomal subunit.

In terms of biological role, binds 23S rRNA and is also seen to make contacts with the A and possibly P site tRNAs. The protein is Large ribosomal subunit protein uL16 of Francisella tularensis subsp. tularensis (strain FSC 198).